The following is a 110-amino-acid chain: Ribonuclease H2 subunit C (110 aa).

Positions 45–69 (LKREKSATPSSSDNTTSNTFSNGAI) are disordered. The segment covering 51–66 (ATPSSSDNTTSNTFSN) has biased composition (low complexity).

Belongs to the RNase H2 subunit C family. Highly divergent. The RNase 2 complex is a heterotrimer composed of the catalytic subunit RNH201 and of the non-catalytic subunits RNH202 and RNH203.

Its subcellular location is the cytoplasm. It localises to the nucleus. Its function is as follows. Non catalytic subunit of RNase H2, an endonuclease that specifically degrades the RNA of RNA:DNA hybrids. Participates in DNA replication, possibly by mediating the removal of lagging-strand Okazaki fragment RNA primers during DNA replication. Mediates the excision of single ribonucleotides from DNA:RNA duplexes. This Saccharomyces cerevisiae (strain ATCC 204508 / S288c) (Baker's yeast) protein is Ribonuclease H2 subunit C (RNH203).